We begin with the raw amino-acid sequence, 193 residues long: Ion-translocating oxidoreductase complex subunit A (193 aa).

The next 6 membrane-spanning stretches (helical) occupy residues 5 to 25, 38 to 58, 65 to 85, 102 to 122, 134 to 154, and 171 to 191; these read LLILVSTILVNNFVLVQFLGL, AMGMSLATTFVLTLSSLCSYL, APLGMEFLKTITFILVIAVVV, VLGIFLPLITTNCAVLGVALL, ILYGFGAAVGFSLVLTLFSAM, and AIGMITAGLMSLAFLGFTGLV.

This sequence belongs to the NqrDE/RnfAE family. In terms of assembly, the complex is composed of six subunits: RnfA, RnfB, RnfC, RnfD, RnfE and RnfG.

The protein localises to the cell inner membrane. Functionally, part of a membrane-bound complex that couples electron transfer with translocation of ions across the membrane. The polypeptide is Ion-translocating oxidoreductase complex subunit A (Hahella chejuensis (strain KCTC 2396)).